A 67-amino-acid chain; its full sequence is UPF0253 protein VV2574 (67 aa).

This sequence belongs to the UPF0253 family.

The chain is UPF0253 protein VV2574 from Vibrio vulnificus (strain YJ016).